The following is a 220-amino-acid chain: 1-Cys peroxiredoxin A (220 aa).

The region spanning leucine 4 to threonine 165 is the Thioredoxin domain. The active-site Cysteine sulfenic acid (-SOH) intermediate is cysteine 46. The Bipartite nuclear localization signal signature appears at lysine 195–lysine 218.

The protein belongs to the peroxiredoxin family. Prx6 subfamily.

It is found in the nucleus. The protein resides in the cytoplasm. It carries out the reaction a hydroperoxide + [thioredoxin]-dithiol = an alcohol + [thioredoxin]-disulfide + H2O. Functionally, thiol-specific peroxidase that catalyzes the reduction of hydrogen peroxide and organic hydroperoxides to water and alcohols, respectively. Seems to contribute to the inhibition of germination during stress. This Oryza sativa subsp. japonica (Rice) protein is 1-Cys peroxiredoxin A.